The following is a 265-amino-acid chain: Indole-3-glycerol phosphate synthase (265 aa).

It belongs to the TrpC family.

The catalysed reaction is 1-(2-carboxyphenylamino)-1-deoxy-D-ribulose 5-phosphate + H(+) = (1S,2R)-1-C-(indol-3-yl)glycerol 3-phosphate + CO2 + H2O. Its pathway is amino-acid biosynthesis; L-tryptophan biosynthesis; L-tryptophan from chorismate: step 4/5. In Xanthomonas axonopodis pv. citri (strain 306), this protein is Indole-3-glycerol phosphate synthase.